Consider the following 137-residue polypeptide: Small heat shock protein IbpA (137 aa).

The sHSP domain maps to 28 to 137 (SQSNGGYPPY…ANKPRRIEIN (110 aa)).

It belongs to the small heat shock protein (HSP20) family. As to quaternary structure, monomer. Forms homomultimers of about 100-150 subunits at optimal growth temperatures. Conformation changes to monomers at high temperatures or high ionic concentrations.

Its subcellular location is the cytoplasm. Functionally, associates with aggregated proteins, together with IbpB, to stabilize and protect them from irreversible denaturation and extensive proteolysis during heat shock and oxidative stress. Aggregated proteins bound to the IbpAB complex are more efficiently refolded and reactivated by the ATP-dependent chaperone systems ClpB and DnaK/DnaJ/GrpE. Its activity is ATP-independent. The protein is Small heat shock protein IbpA of Salmonella choleraesuis (strain SC-B67).